We begin with the raw amino-acid sequence, 409 residues long: Bone morphogenetic protein 4 (409 aa).

The signal sequence occupies residues 1–19 (MIPGNRMLMVVLLCQVLLG). The propeptide occupies 20-293 (GASHASLIPE…ALTRRRRAKR (274 aa)). At S91 the chain carries Phosphoserine. Residues 91-110 (SGEEEEEEQMPSGGLEYPER) are disordered. N144, N209, N351, and N366 each carry an N-linked (GlcNAc...) asparagine glycan. 3 disulfide bridges follow: C309-C374, C338-C406, and C342-C408.

This sequence belongs to the TGF-beta family. As to quaternary structure, homodimer; disulfide-linked. Interacts with GREM2. Part of a complex consisting of TWSG1 and CHRD. Interacts with the serine proteases, HTRA1 and HTRA3; the interaction with either inhibits BMP4-mediated signaling. The HTRA protease activity is required for this inhibition. Interacts with SOSTDC1. Interacts with FBN1 (via N-terminal domain) and FBN2. Interacts with type I receptor BMPR1A. Interacts with type II receptor BMPR2. Interacts with FSTL1; this interaction inhibits the activation of the BMP4/Smad1/5/8 signaling pathway. Interacts with SCUBE3. Interacts with TGFBR3.

It localises to the secreted. The protein resides in the extracellular space. Its subcellular location is the extracellular matrix. In terms of biological role, growth factor of the TGF-beta superfamily that plays essential roles in many developmental processes, including neurogenesis, vascular development, angiogenesis and osteogenesis. Acts in concert with PTHLH/PTHRP to stimulate ductal outgrowth during embryonic mammary development and to inhibit hair follicle induction. Initiates the canonical BMP signaling cascade by associating with type I receptor BMPR1A and type II receptor BMPR2. Once all three components are bound together in a complex at the cell surface, BMPR2 phosphorylates and activates BMPR1A. In turn, BMPR1A propagates signal by phosphorylating SMAD1/5/8 that travel to the nucleus and act as activators and repressors of transcription of target genes. Positively regulates the expression of odontogenic development regulator MSX1 via inducing the IPO7-mediated import of SMAD1 to the nucleus. Required for MSX1-mediated mesenchymal molar tooth bud development beyond the bud stage, via promoting Wnt signaling. Acts as a positive regulator of odontoblast differentiation during mesenchymal tooth germ formation, expression is repressed during the bell stage by MSX1-mediated inhibition of CTNNB1 signaling. Able to induce its own expression in dental mesenchymal cells and also in the neighboring dental epithelial cells via an MSX1-mediated pathway. Can also signal through non-canonical BMP pathways such as ERK/MAP kinase, PI3K/Akt, or SRC cascades. For example, induces SRC phosphorylation which, in turn, activates VEGFR2, leading to an angiogenic response. The protein is Bone morphogenetic protein 4 (BMP4) of Oryctolagus cuniculus (Rabbit).